The sequence spans 1011 residues: DTSEFDPLANKEYTEEQKQTEEQEQKEFLSQTTTPALEADDGFIVTSASFAQSTPSMSALSGNISPDSQTSDPITKAVRETIIQPQKDNLIEQILKDLAALTDRDLAEQKRKEIEEEKEKNKTLSTFFGNPANREFIDKALEKPELKKKLESIEIAGYNNVHNTFSAASGYPGGFKPVQWENHVSASDLRATVVKNDAGDELCTLNETTVKTKPFTLAKQDGTQVQISSYREIDFPIKLDKADGSMHLSMVALKADGTKPSKDKAVYFTAHYEEGPNGKPQLKEISSPKPLKFAGTGDDAIAYIEHGGEIYTLAVTRGKYKEMMKEVELNQGQSVDLSQAEDIIIGQGQSKEQPLITPQQTTSSSVEPPQYKQQVPPITPTNQPLQPETSQMPQSQQVNPNLLNTATALSGSMQDLLNYVNAGLTKEIDSNKQIDLIKEAATAILNNEKSDIAEKQANIIALAENTVNNKNLKPDAKVAGVNAVLETIKNDQNTPNLEKLKMLEATVAIILNSENLEPKQKQQMLEKAVDVGLSLKDDASRAVTIDGIKDVVIKTNLSTEDKGTMLIAVGDKVNVSELSNAEKQKSLGSVLKKGVEAQVLSPAQQQLIQQHLDKITAEQIKKDTIKKVNDILFDPLSNTELKTTNIQAITSNVLDGPATAKVKGEIIQEITNTVAGSSLEAQDKAAIIKGIGETIATHSDTSLSLPNKALIMASAEKGIAESQTNLPDRELMTKGLVDGIYEGKGGPEITKAVSSGIDNSNINDSEKEALKKAKDAASEAALDRDTQNLTEGLKGQNIEEHKPHDDIYNKAREVINAVNPVIEALEKSKEPVVSAEERIVQETSSILNNISKLAVEKVNNFRAMLSPNGNLKTLEEKKEESIKKVDELVKAFGTKSSTEEQQSFIKTNLIDDKTLSKEVRLQTIDKLLQEQKRAEAIENPSVKTEDVRVVSGKSKLKPISKDNPDIEKAKMVVGRDRVNIKGNIKIMGALMNARDIIQSENLNKSTPIKRE.

Disordered regions lie at residues 1 to 37, 54 to 73, and 348 to 396; these read DTSEFDPLANKEYTEEQKQTEEQEQKEFLSQTTTPAL, TPSMSALSGNISPDSQTSDP, and GQSK…PQSQ. A compositionally biased stretch (basic and acidic residues) spans 12-27; sequence EYTEEQKQTEEQEQKE. 2 stretches are compositionally biased toward polar residues: residues 348-373 and 380-396; these read GQSKEQPLITPQQTTSSSVEPPQYKQ and PTNQPLQPETSQMPQSQ.

Its subcellular location is the cytoplasm. This is Antigenic heat-stable 120 kDa protein (sca4) from Rickettsia sibirica subsp. mongolitimonae (Rickettsia mongolotimonae).